The chain runs to 359 residues: Outer membrane protein assembly factor BamC (359 aa).

The N-terminal stretch at Met1–Ser21 is a signal peptide. Cys22 carries the N-palmitoyl cysteine lipid modification. Cys22 is lipidated: S-diacylglycerol cysteine.

The protein belongs to the BamC family. As to quaternary structure, part of the Bam complex.

The protein localises to the cell outer membrane. Functionally, part of the outer membrane protein assembly complex, which is involved in assembly and insertion of beta-barrel proteins into the outer membrane. The chain is Outer membrane protein assembly factor BamC from Kangiella koreensis (strain DSM 16069 / JCM 12317 / KCTC 12182 / SW-125).